The primary structure comprises 812 residues: Probable inorganic carbon transporter subunit DabA (812 aa).

Zn(2+) is bound by residues Cys-337, Asp-339, His-499, and Cys-514.

The protein belongs to the inorganic carbon transporter (TC 9.A.2) DabA family. Forms a complex with DabB. Requires Zn(2+) as cofactor.

The protein localises to the cell inner membrane. Its function is as follows. Part of an energy-coupled inorganic carbon pump. The protein is Probable inorganic carbon transporter subunit DabA of Xanthomonas euvesicatoria pv. vesicatoria (strain 85-10) (Xanthomonas campestris pv. vesicatoria).